A 103-amino-acid polypeptide reads, in one-letter code: Putative double-stranded DNA mimic protein HD_0986 (103 aa).

It belongs to the putative dsDNA mimic protein family.

Its function is as follows. May act as a double-stranded DNA (dsDNA) mimic. Probably regulates the activity of a dsDNA-binding protein. The sequence is that of Putative double-stranded DNA mimic protein HD_0986 from Haemophilus ducreyi (strain 35000HP / ATCC 700724).